The sequence spans 69 residues: uncharacterized protein (69 aa).

The N-terminal stretch at 1–16 is a signal peptide; sequence MSLGLIFALLLTHAAA.

This is an uncharacterized protein from Archaeoglobus fulgidus (strain ATCC 49558 / DSM 4304 / JCM 9628 / NBRC 100126 / VC-16).